Consider the following 356-residue polypeptide: Protein ATP1B4 (356 aa).

Topologically, residues 1-109 (MRRQLRSRRA…SLARTGQSRS (109 aa)) are nuclear. Residues 26–78 (EANHNYLADEEEEAEEEAQVMMVPGLEEEEEEEEGKEEEEEREEEEGQGQSTG) form a disordered region. 2 stretches are compositionally biased toward acidic residues: residues 33-43 (ADEEEEAEEEA) and 51-72 (LEEE…EEEG). The chain crosses the membrane as a helical; Signal-anchor for type II membrane protein span at residues 110–130 (LILVIYFFFYASLAAVITLFI). Residues 131–356 (YMLFLAISPY…RIIFTLNIET (226 aa)) lie on the Perinuclear space side of the membrane.

Belongs to the X(+)/potassium ATPases subunit beta family. In terms of assembly, associates with a SMAD7-transcriptional complex. Interacts with TOR1AIP1. Does not associate with known Na,K-ATPase alpha-subunits. Interacts with SNW1. As to expression, expressed in skeletal muscle (at protein level). Expressed during postnatal development in skeletal muscle and heart.

It is found in the nucleus inner membrane. In terms of biological role, may act as a transcriptional coregulator during muscle development through its interaction with SNW1. Has lost its ancestral function as a Na,K-ATPase beta-subunit. This Mus musculus (Mouse) protein is Protein ATP1B4 (Atp1b4).